Consider the following 34-residue polypeptide: Photosystem II reaction center protein M (34 aa).

Residues 5-25 (ILAFIATALFILVPTAFLLII) form a helical membrane-spanning segment.

Belongs to the PsbM family. PSII is composed of 1 copy each of membrane proteins PsbA, PsbB, PsbC, PsbD, PsbE, PsbF, PsbH, PsbI, PsbJ, PsbK, PsbL, PsbM, PsbT, PsbX, PsbY, PsbZ, Psb30/Ycf12, at least 3 peripheral proteins of the oxygen-evolving complex and a large number of cofactors. It forms dimeric complexes.

Its subcellular location is the plastid. It is found in the chloroplast thylakoid membrane. Its function is as follows. One of the components of the core complex of photosystem II (PSII). PSII is a light-driven water:plastoquinone oxidoreductase that uses light energy to abstract electrons from H(2)O, generating O(2) and a proton gradient subsequently used for ATP formation. It consists of a core antenna complex that captures photons, and an electron transfer chain that converts photonic excitation into a charge separation. This subunit is found at the monomer-monomer interface. The sequence is that of Photosystem II reaction center protein M from Buxus microphylla (Littleleaf boxwood).